A 241-amino-acid chain; its full sequence is Neuromodulin (241 aa).

A compositionally biased stretch (basic and acidic residues) spans 1–26; the sequence is TKQVEKNEDGDQKIEQDGIKPEDKAH. Positions 1-241 are disordered; sequence TKQVEKNEDG…EESKADQENA (241 aa). The 30-residue stretch at 25–54 folds into the IQ domain; sequence AHKAATKIQASFRGHITRKKLKGEKKGDAP. Composition is skewed to low complexity over residues 80–95 and 118–131; these read APAATEAAAADSAQQE and SEQPAPQAATPAAS. 2 stretches are compositionally biased toward basic and acidic residues: residues 132 to 147 and 159 to 171; these read SEEKTAAAAAPEREST and KADEAQDKEEPKQ. The span at 172–198 shows a compositional bias: low complexity; that stretch reads ADVPAADTTATTTPAAEDATAKATAQP. Composition is skewed to basic and acidic residues over residues 208–220 and 232–241; these read TEEKTDAVEETKP and EESKADQENA.

Belongs to the neuromodulin family. Binds calmodulin with a greater affinity in the absence of Ca(2+) than in its presence. In terms of processing, palmitoylated. Palmitoylation is essential for plasma membrane association.

It is found in the cell membrane. The protein resides in the cell projection. It localises to the growth cone membrane. Its subcellular location is the synapse. The protein localises to the filopodium membrane. This protein is associated with nerve growth. It is a major component of the motile 'growth cones' that form the tips of elongating axons. Plays a role in axonal and dendritic filopodia induction. This is Neuromodulin (GAP43) from Serinus canaria (Island canary).